Consider the following 620-residue polypeptide: Cryptochrome-1 (620 aa).

The Photolyase/cryptochrome alpha/beta domain maps to Val-3 to Leu-132. 3 consecutive short sequence motifs (LIR) follow at residues Asn-50–Phe-54, Asp-82–Leu-87, and Lys-151–Leu-156. Ser-252 contributes to the FAD binding site. 4 consecutive short sequence motifs (LIR) follow at residues Leu-255–Leu-260, Asp-271–Val-276, Ser-285–Leu-290, and Thr-335–Trp-339. Position 289 (Gln-289) interacts with FAD. Residue His-355 coordinates FAD. An LIR 8 motif is present at residues Lys-379–Leu-384. Asp-387–Asp-389 lines the FAD pocket. 5 consecutive short sequence motifs (LIR) follow at residues Gly-395–Leu-400, His-411–Val-416, Arg-430–Val-435, Gln-486–Leu-491, and Ser-492–Leu-497. Residues Gly-592–Asn-620 are disordered.

Belongs to the DNA photolyase class-1 family. Component of the circadian core oscillator, which includes the CRY proteins, CLOCK or NPAS2, BMAL1 or BMAL2, CSNK1E, and the PER proteins. FAD serves as cofactor. (6R)-5,10-methylene-5,6,7,8-tetrahydrofolate is required as a cofactor. As to expression, expressed in the retina. High levels found in ganglion cells of the retina.

The protein resides in the cytoplasm. Its subcellular location is the nucleus. Transcriptional repressor which forms a core component of the circadian clock. The circadian clock, an internal time-keeping system, regulates various physiological processes through the generation of approximately 24 hour circadian rhythms in gene expression, which are translated into rhythms in metabolism and behavior. It is derived from the Latin roots 'circa' (about) and 'diem' (day) and acts as an important regulator of a wide array of physiological functions including metabolism, sleep, body temperature, blood pressure, endocrine, immune, cardiovascular, and renal function. Consists of two major components: the central clock, residing in the suprachiasmatic nucleus (SCN) of the brain, and the peripheral clocks that are present in nearly every tissue and organ system. Both the central and peripheral clocks can be reset by environmental cues, also known as Zeitgebers (German for 'timegivers'). The predominant Zeitgeber for the central clock is light, which is sensed by retina and signals directly to the SCN. The central clock entrains the peripheral clocks through neuronal and hormonal signals, body temperature and feeding-related cues, aligning all clocks with the external light/dark cycle. Circadian rhythms allow an organism to achieve temporal homeostasis with its environment at the molecular level by regulating gene expression to create a peak of protein expression once every 24 hours to control when a particular physiological process is most active with respect to the solar day. Transcription and translation of core clock components (CLOCK, NPAS2, BMAL1, BMAL2, PER1, PER2, PER3, CRY1 and CRY2) plays a critical role in rhythm generation, whereas delays imposed by post-translational modifications (PTMs) are important for determining the period (tau) of the rhythms (tau refers to the period of a rhythm and is the length, in time, of one complete cycle). A diurnal rhythm is synchronized with the day/night cycle, while the ultradian and infradian rhythms have a period shorter and longer than 24 hours, respectively. Disruptions in the circadian rhythms contribute to the pathology of cardiovascular diseases, cancer, metabolic syndromes and aging. A transcription/translation feedback loop (TTFL) forms the core of the molecular circadian clock mechanism. Transcription factors, CLOCK or NPAS2 and BMAL1 or BMAL2, form the positive limb of the feedback loop, act in the form of a heterodimer and activate the transcription of core clock genes and clock-controlled genes (involved in key metabolic processes), harboring E-box elements (5'-CACGTG-3') within their promoters. The core clock genes: PER1/2/3 and CRY1/2 which are transcriptional repressors form the negative limb of the feedback loop and interact with the CLOCK|NPAS2-BMAL1|BMAL2 heterodimer inhibiting its activity and thereby negatively regulating their own expression. This heterodimer also activates nuclear receptors NR1D1, NR1D2, RORA, RORB and RORG, which form a second feedback loop and which activate and repress BMAL1 transcription, respectively. CRY1 and CRY2 have redundant functions but also differential and selective contributions at least in defining the pace of the SCN circadian clock and its circadian transcriptional outputs. More potent transcriptional repressor in cerebellum and liver than CRY2, though more effective in lengthening the period of the SCN oscillator. On its side, CRY2 seems to play a critical role in tuning SCN circadian period by opposing the action of CRY1. With CRY2, is dispensable for circadian rhythm generation but necessary for the development of intercellular networks for rhythm synchrony. Capable of translocating circadian clock core proteins such as PER proteins to the nucleus. Interacts with CLOCK:BMAL1 independently of PER proteins and is found at CLOCK:BMAL1-bound sites, suggesting that CRY may act as a molecular gatekeeper to maintain CLOCK:BMAL1 in a poised and repressed state until the proper time for transcriptional activation. The sequence is that of Cryptochrome-1 (CRY1) from Sylvia borin (Garden warbler).